Consider the following 368-residue polypeptide: Flagellar P-ring protein (368 aa).

The first 22 residues, 1–22 (MLIPLARAVLALELLGAGAAHA), serve as a signal peptide directing secretion.

It belongs to the FlgI family. As to quaternary structure, the basal body constitutes a major portion of the flagellar organelle and consists of four rings (L,P,S, and M) mounted on a central rod.

Its subcellular location is the periplasm. It is found in the bacterial flagellum basal body. Its function is as follows. Assembles around the rod to form the L-ring and probably protects the motor/basal body from shearing forces during rotation. The polypeptide is Flagellar P-ring protein (Bordetella pertussis (strain Tohama I / ATCC BAA-589 / NCTC 13251)).